Consider the following 1032-residue polypeptide: MGFCRSALHPLSLLVQAIMLAMTLALGTLPAFLPCELQPHGLVNCNWLFLKSVPHFSMAAPRGNVTSLSLSSNRIHHLHDSDFAHLPSLRHLNLKWNCPPVGLSPMHFPCHMTIEPSTFLAVPTLEELNLSYNNIMTVPALPKSLISLSLSHTNILMLDSASLAGLHALRFLFMDGNCYYKNPCRQALEVAPGALLGLGNLTHLSLKYNNLTVVPRNLPSSLEYLLLSYNRIVKLAPEDLANLTALRVLDVGGNCRRCDHAPNPCMECPRHFPQLHPDTFSHLSRLEGLVLKDSSLSWLNASWFRGLGNLRVLDLSENFLYKCITKTKAFQGLTQLRKLNLSFNYQKRVSFAHLSLAPSFGSLVALKELDMHGIFFRSLDETTLRPLARLPMLQTLRLQMNFINQAQLGIFRAFPGLRYVDLSDNRISGASELTATMGEADGGEKVWLQPGDLAPAPVDTPSSEDFRPNCSTLNFTLDLSRNNLVTVQPEMFAQLSHLQCLRLSHNCISQAVNGSQFLPLTGLQVLDLSHNKLDLYHEHSFTELPRLEALDLSYNSQPFGMQGVGHNFSFVAHLRTLRHLSLAHNNIHSQVSQQLCSTSLRALDFSGNALGHMWAEGDLYLHFFQGLSGLIWLDLSQNRLHTLLPQTLRNLPKSLQVLRLRDNYLAFFKWWSLHFLPKLEVLDLAGNQLKALTNGSLPAGTRLRRLDVSCNSISFVAPGFFSKAKELRELNLSANALKTVDHSWFGPLASALQILDVSANPLHCACGAAFMDFLLEVQAAVPGLPSRVKCGSPGQLQGLSIFAQDLRLCLDEALSWDCFALSLLAVALGLGVPMLHHLCGWDLWYCFHLCLAWLPWRGRQSGRDEDALPYDAFVVFDKTQSAVADWVYNELRGQLEECRGRWALRLCLEERDWLPGKTLFENLWASVYGSRKTLFVLAHTDRVSGLLRASFLLAQQRLLEDRKDVVVLVILSPDGRRSRYVRLRQRLCRQSVLLWPHQPSGQRSFWAQLGMALTRDNHHFYNRNFCQGPTAE.

A signal peptide spans M1 to A25. The Extracellular segment spans residues L26 to C818. Cysteines 35 and 45 form a disulfide. W47–K51 lines the DNA pocket. LRR repeat units lie at residues R62–H85, P87–C110, V122–S147, L150–L166, H167–V190, L198–S221, E223–N242, L243–C268, L283–G306, G308–G332, L333–L356, L363–P386, L390–A413, and P415–A440. A glycan (N-linked (GlcNAc...) asparagine) is linked at N64. Residues S72 to H77 and K95 to P109 each bind DNA. An intrachain disulfide couples C98 to C110. A glycan (N-linked (GlcNAc...) asparagine) is linked at N129. Residue Y132 coordinates DNA. A disulfide bond links C178 and C184. Y179–K181 is a binding site for DNA. A glycan (N-linked (GlcNAc...) asparagine) is linked at N200. Y208 is a binding site for DNA. N-linked (GlcNAc...) asparagine glycosylation is found at N210 and N242. 2 cysteine pairs are disulfide-bonded: C255–C268 and C258–C265. Residues C258 and C265 are each lipidated (S-palmitoyl cysteine). An N-linked (GlcNAc...) asparagine glycan is attached at N300. N340 is a glycosylation site (N-linked (GlcNAc...) asparagine). Residues N469, N474, and N513 are each glycosylated (N-linked (GlcNAc...) asparagine). LRR repeat units lie at residues C470–Q494, S496–P519, L520–E543, P545–A572, L574–T598, L600–H622, L627–N650, P652–F675, L676–A699, T701–K723, A724–P747, and A749–D772. Residues C470 and C500 are joined by a disulfide bond. Residue N567 is glycosylated (N-linked (GlcNAc...) asparagine). The N-linked (GlcNAc...) asparagine glycan is linked to N694. N731 is a glycosylation site (N-linked (GlcNAc...) asparagine). Cystine bridges form between C764–C790 and C766–C809. A helical membrane pass occupies residues F819–C839. The Cytoplasmic portion of the chain corresponds to G840–E1032. A TIR domain is found at L868–L1013.

It belongs to the Toll-like receptor family. In terms of assembly, monomer and homodimer. Exists as a monomer in the absence of unmethylated cytidine-phosphate-guanosine (CpG) ligand. Proteolytic processing of an insertion loop (Z-loop) is required for homodimerization upon binding to the unmethylated CpG ligand leading to its activation. Interacts with MYD88 via their respective TIR domains. Interacts with BTK. Interacts (via transmembrane domain) with UNC93B1. Interacts with CD300LH; the interaction may promote full activation of TLR9-triggered innate responses. Interacts with CNPY3 and HSP90B1; this interaction is required for proper folding in the endoplasmic reticulum. Interacts with SMPDL3B. Interacts with CD82; this interaction is essential for TLR9-dependent myddosome formation in response to CpG stimulation. In terms of processing, activated by proteolytic cleavage of the flexible loop between repeats LRR14 and LRR15 within the ectodomain. Cleavage requires UNC93B1. Proteolytically processed by first removing the majority of the ectodomain by either asparagine endopeptidase (AEP) or a cathepsin followed by a trimming event that is solely cathepsin mediated and required for optimal receptor signaling. Post-translationally, palmitoylated by ZDHHC3 in the Golgi regulates TLR9 trafficking from the Golgi to endosomes. Depalmitoylation by PPT1 controls the release of TLR9 from UNC93B1 in endosomes. In terms of tissue distribution, highly expressed in spleen, lymph node, tonsil and peripheral blood leukocytes, especially in plasmacytoid pre-dendritic cells. Levels are much lower in monocytes and CD11c+ immature dendritic cells. Also detected in lung and liver.

The protein localises to the endoplasmic reticulum membrane. It localises to the early endosome membrane. It is found in the lysosome. Its subcellular location is the cytoplasmic vesicle. The protein resides in the phagosome. The protein localises to the golgi apparatus membrane. Functionally, key component of innate and adaptive immunity. TLRs (Toll-like receptors) control host immune response against pathogens through recognition of molecular patterns specific to microorganisms. TLR9 is a nucleotide-sensing TLR which is activated by unmethylated cytidine-phosphate-guanosine (CpG) dinucleotides. Acts via MYD88 and TRAF6, leading to NF-kappa-B activation, cytokine secretion and the inflammatory response. Controls lymphocyte response to Helicobacter infection. Upon CpG stimulation, induces B-cell proliferation, activation, survival and antibody production. The chain is Toll-like receptor 9 (TLR9) from Homo sapiens (Human).